Consider the following 377-residue polypeptide: Glutamate 5-kinase (377 aa).

K20 contacts ATP. Substrate contacts are provided by S60, D147, and N159. 179–180 (TD) is a binding site for ATP. Residues 285 to 363 (AGRLVIDDGA…DKVYQVLGEA (79 aa)) form the PUA domain.

The protein belongs to the glutamate 5-kinase family.

The protein resides in the cytoplasm. It catalyses the reaction L-glutamate + ATP = L-glutamyl 5-phosphate + ADP. It participates in amino-acid biosynthesis; L-proline biosynthesis; L-glutamate 5-semialdehyde from L-glutamate: step 1/2. Catalyzes the transfer of a phosphate group to glutamate to form L-glutamate 5-phosphate. This chain is Glutamate 5-kinase, found in Acinetobacter baumannii (strain AB307-0294).